The sequence spans 249 residues: MHTAAQFSISTLNNLYEISSVEVGQHFYWQIGSFEVHAQVLITSWIVIAILLSLAVLATRDLQTIPTSGQNFVEYVLEFIRDLTRTQIGEEEYRPWVPFIGTMFLFIFVSNWSGALLPWRVLELPHGELAAPTNDINTTVALALLTSVAYFYAGLHKRGLNYFGKYIQPTPVLLPINILEDFTKPLSLSFRLFGNILADELVVAVLISLVPLVVPIPMMFLGLFTSAIQALIFATLAAAYIGESMEGHH.

Transmembrane regions (helical) follow at residues 38 to 58, 97 to 117, 136 to 156, 201 to 221, and 222 to 242; these read AQVLITSWIVIAILLSLAVLA, VPFIGTMFLFIFVSNWSGALL, INTTVALALLTSVAYFYAGLH, LVVAVLISLVPLVVPIPMMFL, and GLFTSAIQALIFATLAAAYIG.

It belongs to the ATPase A chain family. In terms of assembly, F-type ATPases have 2 components, CF(1) - the catalytic core - and CF(0) - the membrane proton channel. CF(1) has five subunits: alpha(3), beta(3), gamma(1), delta(1), epsilon(1). CF(0) has four main subunits: a, b, b' and c.

The protein localises to the plastid. It localises to the chloroplast thylakoid membrane. In terms of biological role, key component of the proton channel; it plays a direct role in the translocation of protons across the membrane. This is ATP synthase subunit a, chloroplastic from Physcomitrium patens (Spreading-leaved earth moss).